A 255-amino-acid chain; its full sequence is Pyridoxine 5'-phosphate synthase (255 aa).

3-amino-2-oxopropyl phosphate-binding residues include Asn-8 and Arg-19. His-44 acts as the Proton acceptor in catalysis. 1-deoxy-D-xylulose 5-phosphate contacts are provided by Arg-46 and His-51. The active-site Proton acceptor is the Glu-74. Residue Thr-111 participates in 1-deoxy-D-xylulose 5-phosphate binding. The active-site Proton donor is His-202. Residues Asp-203 and 225-226 contribute to the 3-amino-2-oxopropyl phosphate site; that span reads GH.

Belongs to the PNP synthase family. In terms of assembly, homooctamer; tetramer of dimers.

It is found in the cytoplasm. The catalysed reaction is 3-amino-2-oxopropyl phosphate + 1-deoxy-D-xylulose 5-phosphate = pyridoxine 5'-phosphate + phosphate + 2 H2O + H(+). It functions in the pathway cofactor biosynthesis; pyridoxine 5'-phosphate biosynthesis; pyridoxine 5'-phosphate from D-erythrose 4-phosphate: step 5/5. Functionally, catalyzes the complicated ring closure reaction between the two acyclic compounds 1-deoxy-D-xylulose-5-phosphate (DXP) and 3-amino-2-oxopropyl phosphate (1-amino-acetone-3-phosphate or AAP) to form pyridoxine 5'-phosphate (PNP) and inorganic phosphate. The sequence is that of Pyridoxine 5'-phosphate synthase from Xanthomonas oryzae pv. oryzae (strain PXO99A).